The chain runs to 381 residues: MAEKTEKPTAKKLRDAAKKGQTFKARDIVALVVIATGALSAPALVDLTRVAAEFTRIASTGAQPNPGAYALAWAKLFLRIAAPFVLLCAAVGALPSLVQSRFTLAVESIRFDLTALDPVKGMKRLFSWRSVKDAVKALLYVGVFAITVRVFADLYHHDVFGLFRARPALLGHMWIVLTVRLVLLFLLCALPVLIVDAAVEYFLYHRELKMDKHEVKQEYKESEGNHEIKSKRREIHQELLSEEIKANVEQSDFIVANPTHIAIGIYVNPDIVPIPFVSVRETNARALAVIRHAEACGVPVVRNVALARSIYRNSPRRYSFVNQDDIDGVMRVLIWLKEVEAANRGGPPREMPPEATHAPDAHGGDAASGGATSAQAGERNA.

4 helical membrane passes run 28–48 (IVAL…VDLT), 80–100 (IAAP…LVQS), 134–154 (AVKA…FADL), and 175–195 (IVLT…VLIV). The interval 343 to 381 (NRGGPPREMPPEATHAPDAHGGDAASGGATSAQAGERNA) is disordered. Over residues 364–381 (GDAASGGATSAQAGERNA) the composition is skewed to low complexity.

This sequence belongs to the type III secretion exporter family.

The protein localises to the cell membrane. Its function is as follows. Part of the bsa type III secretion system, is involved in the intracellular replication of invading bacteria inside the host cell. Probably necessary for the lysis of the vacuole membrane and escape into the host cell cytoplasm. In Burkholderia thailandensis (strain ATCC 700388 / DSM 13276 / CCUG 48851 / CIP 106301 / E264), this protein is Secretion apparatus protein BsaZ (bsaZ).